Consider the following 150-residue polypeptide: Troponin C, isoform 2A (150 aa).

M1 is modified (N-acetylmethionine). EF-hand domains lie at 7–42 (EQIG…MGVK), 43–78 (ISEK…FLIE), 83–118 (ALKT…LDNR), and 119–150 (LTEE…MMNG). The Ca(2+) site is built by D56, D58, S60, E62, and E67. Positions 132, 134, 136, 138, and 143 each coordinate Ca(2+).

It belongs to the troponin C family.

In terms of biological role, troponin is the central regulatory protein of striated muscle contraction. Tn consists of three components: Tn-I which is the inhibitor of actomyosin ATPase, Tn-T which contains the binding site for tropomyosin and Tn-C. The binding of calcium to Tn-C abolishes the inhibitory action of Tn on actin filaments. The polypeptide is Troponin C, isoform 2A (Homarus americanus (American lobster)).